Here is a 234-residue protein sequence, read N- to C-terminus: Probable porphobilinogen deaminase (234 aa).

The protein belongs to the HMBS family.

The catalysed reaction is 4 porphobilinogen + H2O = hydroxymethylbilane + 4 NH4(+). It participates in porphyrin-containing compound metabolism; protoporphyrin-IX biosynthesis; coproporphyrinogen-III from 5-aminolevulinate: step 2/4. Its function is as follows. Tetrapolymerization of the monopyrrole PBG into the hydroxymethylbilane pre-uroporphyrinogen in several discrete steps. The polypeptide is Probable porphobilinogen deaminase (hemC) (Chlamydia pneumoniae (Chlamydophila pneumoniae)).